Here is a 576-residue protein sequence, read N- to C-terminus: 2-succinyl-5-enolpyruvyl-6-hydroxy-3-cyclohexene-1-carboxylate synthase (576 aa).

It belongs to the TPP enzyme family. MenD subfamily. Homodimer. It depends on Mg(2+) as a cofactor. Requires Mn(2+) as cofactor. Thiamine diphosphate serves as cofactor.

It catalyses the reaction isochorismate + 2-oxoglutarate + H(+) = 5-enolpyruvoyl-6-hydroxy-2-succinyl-cyclohex-3-ene-1-carboxylate + CO2. It participates in quinol/quinone metabolism; 1,4-dihydroxy-2-naphthoate biosynthesis; 1,4-dihydroxy-2-naphthoate from chorismate: step 2/7. Its pathway is quinol/quinone metabolism; menaquinone biosynthesis. Functionally, catalyzes the thiamine diphosphate-dependent decarboxylation of 2-oxoglutarate and the subsequent addition of the resulting succinic semialdehyde-thiamine pyrophosphate anion to isochorismate to yield 2-succinyl-5-enolpyruvyl-6-hydroxy-3-cyclohexene-1-carboxylate (SEPHCHC). The chain is 2-succinyl-5-enolpyruvyl-6-hydroxy-3-cyclohexene-1-carboxylate synthase from Photobacterium profundum (strain SS9).